The chain runs to 360 residues: Peptide chain release factor 1 (360 aa).

Position 235 is an N5-methylglutamine (Gln235).

This sequence belongs to the prokaryotic/mitochondrial release factor family. Post-translationally, methylated by PrmC. Methylation increases the termination efficiency of RF1.

It is found in the cytoplasm. In terms of biological role, peptide chain release factor 1 directs the termination of translation in response to the peptide chain termination codons UAG and UAA. This Paraburkholderia phymatum (strain DSM 17167 / CIP 108236 / LMG 21445 / STM815) (Burkholderia phymatum) protein is Peptide chain release factor 1.